Here is a 381-residue protein sequence, read N- to C-terminus: Heterogeneous nuclear rnp K-like protein 2 (381 aa).

The tract at residues 1 to 34 (MSQFFEAATPVAIPTNNTNGGSSDAGSAATGGAP) is disordered. The segment covering 15–33 (TNNTNGGSSDAGSAATGGA) has biased composition (low complexity). 3 consecutive KH domains span residues 43-107 (TINH…IGDI), 156-221 (IGYV…LIEI), and 258-326 (NTRI…ESML). Residues 344–381 (LEAAEGDATVVTERSDSASFLEEKEEPQENHDNKEEQS) form a disordered region. Phosphoserine is present on residues Ser-358, Ser-360, and Ser-362. The span at 370 to 381 (PQENHDNKEEQS) shows a compositional bias: basic and acidic residues.

The protein belongs to the HEK2 family. In terms of assembly, binds RNA. Phosphorylated by the plasma membrane-Anchored casein kinase YCK1. Phosphorylation at its C-terminus reduces its RNA-binding capacity.

The protein resides in the cytoplasm. It is found in the P-body. It localises to the nucleus. The protein localises to the chromosome. Its subcellular location is the telomere. Functionally, RNA-binding protein involved in the correct localization of transcripts in the cell. RNA localization is a widespread mechanism for achieving localized protein synthesis. Required for the asymmetric localization to the daughter cell nucleus of the ASH1 transcript, coding for a specific repressor of transcription. Overexpression inhibits translation of the ASH1 transcript. Involved in the stability of transcripts, like the MTL1 mRNA. Involved in structural and functional organization of telomeric chromatin and regulates silencing at the HMR locus. This is Heterogeneous nuclear rnp K-like protein 2 (HEK2) from Saccharomyces cerevisiae (strain YJM789) (Baker's yeast).